The chain runs to 263 residues: Tryptophan synthase alpha chain (263 aa).

Catalysis depends on proton acceptor residues glutamate 49 and aspartate 60.

Belongs to the TrpA family. Tetramer of two alpha and two beta chains.

The enzyme catalyses (1S,2R)-1-C-(indol-3-yl)glycerol 3-phosphate + L-serine = D-glyceraldehyde 3-phosphate + L-tryptophan + H2O. It participates in amino-acid biosynthesis; L-tryptophan biosynthesis; L-tryptophan from chorismate: step 5/5. Its function is as follows. The alpha subunit is responsible for the aldol cleavage of indoleglycerol phosphate to indole and glyceraldehyde 3-phosphate. This Cereibacter sphaeroides (strain ATCC 17029 / ATH 2.4.9) (Rhodobacter sphaeroides) protein is Tryptophan synthase alpha chain.